The following is a 431-amino-acid chain: 5-methylthioadenosine/S-adenosylhomocysteine deaminase (431 aa).

The Zn(2+) site is built by His61 and His63. Residues Glu90 and His183 each coordinate substrate. His210 is a Zn(2+) binding site. Substrate is bound by residues Glu213 and Asp298. Residue Asp298 participates in Zn(2+) binding.

This sequence belongs to the metallo-dependent hydrolases superfamily. MTA/SAH deaminase family. Zn(2+) is required as a cofactor.

The catalysed reaction is S-adenosyl-L-homocysteine + H2O + H(+) = S-inosyl-L-homocysteine + NH4(+). The enzyme catalyses S-methyl-5'-thioadenosine + H2O + H(+) = S-methyl-5'-thioinosine + NH4(+). Functionally, catalyzes the deamination of 5-methylthioadenosine and S-adenosyl-L-homocysteine into 5-methylthioinosine and S-inosyl-L-homocysteine, respectively. Is also able to deaminate adenosine. The polypeptide is 5-methylthioadenosine/S-adenosylhomocysteine deaminase (Halobacterium salinarum (strain ATCC 700922 / JCM 11081 / NRC-1) (Halobacterium halobium)).